We begin with the raw amino-acid sequence, 328 residues long: UPF0421 protein SAUSA300_1870 (328 aa).

The next 4 membrane-spanning stretches (helical) occupy residues 19–39 (IAIF…IYAI), 61–81 (LPAT…FGDQ), 108–128 (VAVL…IFNF), and 132–152 (TLTA…VFPP).

It belongs to the UPF0421 family.

It is found in the cell membrane. The chain is UPF0421 protein SAUSA300_1870 from Staphylococcus aureus (strain USA300).